The primary structure comprises 605 residues: Alpha-amylase (605 aa).

An N-terminal signal peptide occupies residues 1-33 (MGVRRSLAALLAALLGCATSLVALTVAASPAHA). Ca(2+) contacts are provided by asparagine 130 and aspartate 189. Aspartate 219 acts as the Nucleophile in catalysis. Ca(2+) is bound at residue histidine 223. Glutamate 253 serves as the catalytic Proton donor. The 106-residue stretch at 500 to 605 (GDDCTTVTAR…CSQNFYDSWR (106 aa)) folds into the CBM20 domain.

Belongs to the glycosyl hydrolase 13 family. As to quaternary structure, monomer. Ca(2+) serves as cofactor.

It catalyses the reaction Endohydrolysis of (1-&gt;4)-alpha-D-glucosidic linkages in polysaccharides containing three or more (1-&gt;4)-alpha-linked D-glucose units.. This Thermomonospora curvata protein is Alpha-amylase (tam).